Here is a 435-residue protein sequence, read N- to C-terminus: E3 ubiquitin-protein ligase PUB22 (435 aa).

One can recognise a U-box domain in the interval 6–81; that stretch reads EIPSFFLCPI…QSWCTLNASY (76 aa).

As to quaternary structure, interacts with RPN12A. Binds to EXO70B2. Post-translationally, auto-ubiquitinated leading to degradation via the 26S proteasome. This Auto-ubiquitination is repressed by the bacterial elicitor flg22 thus leading to a transiently increased protein stabilization and accumulation.

The protein localises to the cytoplasm. The enzyme catalyses S-ubiquitinyl-[E2 ubiquitin-conjugating enzyme]-L-cysteine + [acceptor protein]-L-lysine = [E2 ubiquitin-conjugating enzyme]-L-cysteine + N(6)-ubiquitinyl-[acceptor protein]-L-lysine.. It participates in protein modification; protein ubiquitination. In terms of biological role, E3 ubiquitin-protein ligase that negatively regulates water stress response. May control in coordination with PUB23 a drought signaling pathway by ubiquitinating cytosolic RPN12a. Acts as a negative regulator of the immunity triggered by the pathogen-associated molecular patterns (PAMPs), in association with PUB23 and PUB24. Regulates EXO70B2 ubiquitination and degradation via the 26S proteasome to attenuate PAMP-induced signaling. This Arabidopsis thaliana (Mouse-ear cress) protein is E3 ubiquitin-protein ligase PUB22.